We begin with the raw amino-acid sequence, 484 residues long: Adenylosuccinate lyase (484 aa).

Alanine 2 carries the post-translational modification N-acetylalanine. Substrate is bound by residues 20 to 21 (RY), 85 to 87 (RHD), and 111 to 112 (TS). Position 147 is an N6-acetyllysine (lysine 147). Histidine 159 acts as the Proton donor/acceptor in catalysis. Glutamine 241 serves as a coordination point for substrate. Serine 289 serves as the catalytic Proton donor/acceptor. An N6-acetyllysine modification is found at lysine 295. Residues arginine 303, arginine 329, serine 334, and arginine 338 each coordinate substrate. A Glycyl lysine isopeptide (Lys-Gly) (interchain with G-Cter in SUMO1) cross-link involves residue lysine 415.

It belongs to the lyase 1 family. Adenylosuccinate lyase subfamily. As to quaternary structure, homotetramer. Residues from neighboring subunits contribute catalytic and substrate-binding residues to each active site. As to expression, ubiquitously expressed. Both isoforms are produced by all tissues. Isoform 2 is 10-fold less abundant than isoform 1.

It carries out the reaction N(6)-(1,2-dicarboxyethyl)-AMP = fumarate + AMP. It catalyses the reaction (2S)-2-[5-amino-1-(5-phospho-beta-D-ribosyl)imidazole-4-carboxamido]succinate = 5-amino-1-(5-phospho-beta-D-ribosyl)imidazole-4-carboxamide + fumarate. The protein operates within purine metabolism; AMP biosynthesis via de novo pathway; AMP from IMP: step 2/2. It functions in the pathway purine metabolism; IMP biosynthesis via de novo pathway; 5-amino-1-(5-phospho-D-ribosyl)imidazole-4-carboxamide from 5-amino-1-(5-phospho-D-ribosyl)imidazole-4-carboxylate: step 2/2. Its activity is regulated as follows. The enzyme reaction kinetics indicate cooperativity between subunits. Functionally, catalyzes two non-sequential steps in de novo AMP synthesis: converts (S)-2-(5-amino-1-(5-phospho-D-ribosyl)imidazole-4-carboxamido)succinate (SAICAR) to fumarate plus 5-amino-1-(5-phospho-D-ribosyl)imidazole-4-carboxamide, and thereby also contributes to de novo IMP synthesis, and converts succinyladenosine monophosphate (SAMP) to AMP and fumarate. This is Adenylosuccinate lyase (ADSL) from Homo sapiens (Human).